The sequence spans 107 residues: Bombesin (107 aa).

The signal sequence occupies residues 1–26 (MSAIPLNRILPLGFLLIFSFISLSSC). A propeptide spanning residues 27–41 (MEFVEDPNNQGGLNL) is cleaved from the precursor. At Gln42 the chain carries Pyrrolidone carboxylic acid. Met55 carries the post-translational modification Methionine amide. The propeptide occupies 56-107 (GKKSLQDTDFEEMESFAKRNVENMKAESERELRHAQLVVRNILEQYLKNMQN).

Expressed by the skin glands.

It is found in the secreted. Stimulates smooth muscle contraction. Role in induction of hypothermia, stimulation of DNA replication and release of many gastrointestinal hormones. Possesses insulin-releasing activity. The protein is Bombesin of Bombina variegata (Yellow-bellied toad).